The sequence spans 335 residues: Phosphate acyltransferase (335 aa).

The protein belongs to the PlsX family. In terms of assembly, homodimer. Probably interacts with PlsY.

The protein localises to the cytoplasm. It catalyses the reaction a fatty acyl-[ACP] + phosphate = an acyl phosphate + holo-[ACP]. Its pathway is lipid metabolism; phospholipid metabolism. Functionally, catalyzes the reversible formation of acyl-phosphate (acyl-PO(4)) from acyl-[acyl-carrier-protein] (acyl-ACP). This enzyme utilizes acyl-ACP as fatty acyl donor, but not acyl-CoA. In Clostridium botulinum (strain ATCC 19397 / Type A), this protein is Phosphate acyltransferase.